The sequence spans 139 residues: Large ribosomal subunit protein bL17 (139 aa).

This sequence belongs to the bacterial ribosomal protein bL17 family. As to quaternary structure, part of the 50S ribosomal subunit. Contacts protein L32.

In Myxococcus xanthus (strain DK1622), this protein is Large ribosomal subunit protein bL17.